Reading from the N-terminus, the 511-residue chain is Bifunctional purine biosynthesis protein PurH (511 aa).

Residues 1–144 (MKTALLSVSD…KNFASVLPVV (144 aa)) form the MGS-like domain.

The protein belongs to the PurH family.

The enzyme catalyses (6R)-10-formyltetrahydrofolate + 5-amino-1-(5-phospho-beta-D-ribosyl)imidazole-4-carboxamide = 5-formamido-1-(5-phospho-D-ribosyl)imidazole-4-carboxamide + (6S)-5,6,7,8-tetrahydrofolate. The catalysed reaction is IMP + H2O = 5-formamido-1-(5-phospho-D-ribosyl)imidazole-4-carboxamide. The protein operates within purine metabolism; IMP biosynthesis via de novo pathway; 5-formamido-1-(5-phospho-D-ribosyl)imidazole-4-carboxamide from 5-amino-1-(5-phospho-D-ribosyl)imidazole-4-carboxamide (10-formyl THF route): step 1/1. It functions in the pathway purine metabolism; IMP biosynthesis via de novo pathway; IMP from 5-formamido-1-(5-phospho-D-ribosyl)imidazole-4-carboxamide: step 1/1. In Pediococcus pentosaceus (strain ATCC 25745 / CCUG 21536 / LMG 10740 / 183-1w), this protein is Bifunctional purine biosynthesis protein PurH.